Here is a 267-residue protein sequence, read N- to C-terminus: Protein PERCC1 (267 aa).

Disordered stretches follow at residues H19–R88, S142–L163, and A247–A267. Residues E28–G50 show a composition bias toward acidic residues. Positions P74–P83 are enriched in low complexity.

Its function is as follows. Plays a critical role in intestinal function. Acts by promoting the development of enteroendocrine cells (EECs) of the gastrointestinal tract and pancreas. It is thereby required for normal enteroendocrine peptide hormone secretion. This Homo sapiens (Human) protein is Protein PERCC1.